Here is a 252-residue protein sequence, read N- to C-terminus: dITP/XTP pyrophosphatase (252 aa).

Substrate is bound at residue 7–12; the sequence is THNEGK. The active-site Proton acceptor is aspartate 74. Mg(2+) is bound at residue aspartate 74. Residues serine 75 and 193 to 196 each bind substrate; that span reads FGYD. Residues 202 to 229 form a disordered region; it reads DDQPAGRVSTEPDHEGEPLTSAEMTPAE. Residues lysine 230 and 235–236 contribute to the substrate site; that span reads HR.

It belongs to the HAM1 NTPase family. In terms of assembly, homodimer. It depends on Mg(2+) as a cofactor.

It catalyses the reaction XTP + H2O = XMP + diphosphate + H(+). It carries out the reaction dITP + H2O = dIMP + diphosphate + H(+). The enzyme catalyses ITP + H2O = IMP + diphosphate + H(+). Its function is as follows. Pyrophosphatase that catalyzes the hydrolysis of nucleoside triphosphates to their monophosphate derivatives, with a high preference for the non-canonical purine nucleotides XTP (xanthosine triphosphate), dITP (deoxyinosine triphosphate) and ITP. Seems to function as a house-cleaning enzyme that removes non-canonical purine nucleotides from the nucleotide pool, thus preventing their incorporation into DNA/RNA and avoiding chromosomal lesions. This is dITP/XTP pyrophosphatase from Bifidobacterium longum (strain NCC 2705).